A 397-amino-acid polypeptide reads, in one-letter code: Mannonate dehydratase (397 aa).

It belongs to the mannonate dehydratase family. It depends on Fe(2+) as a cofactor. Mn(2+) is required as a cofactor.

It catalyses the reaction D-mannonate = 2-dehydro-3-deoxy-D-gluconate + H2O. It participates in carbohydrate metabolism; pentose and glucuronate interconversion. Functionally, catalyzes the dehydration of D-mannonate. This Yersinia pestis bv. Antiqua (strain Antiqua) protein is Mannonate dehydratase.